Here is a 350-residue protein sequence, read N- to C-terminus: Guanine nucleotide-binding protein G(t) subunit alpha (350 aa).

Positions methionine 1–glutamate 21 are disordered. A lipid anchor (N-myristoyl glycine) is attached at glycine 2. Positions alanine 7–glutamate 21 are enriched in basic and acidic residues. Residues arginine 28–phenylalanine 350 form the G-alpha domain. The interval lysine 31 to threonine 44 is G1 motif. Residues glycine 36–serine 43, leucine 171–threonine 177, aspartate 196–glutamine 200, asparagine 265–aspartate 268, and alanine 322 contribute to the GTP site. Mg(2+)-binding residues include serine 43 and threonine 177. The interval aspartate 169–threonine 177 is G2 motif. The segment at phenylalanine 192 to arginine 201 is G3 motif. The segment at valine 261–aspartate 268 is G4 motif. A G5 motif region spans residues threonine 320–threonine 325.

It belongs to the G-alpha family. G(i/o/t/z) subfamily. In terms of assembly, g proteins are composed of 3 units; alpha, beta and gamma. The alpha chain contains the guanine nucleotide binding site.

Guanine nucleotide-binding proteins (G proteins) are involved as modulators or transducers in various transmembrane signaling systems. Transducin is an amplifier and one of the transducers of a visual impulse that performs the coupling between rhodopsin and cGMP-phosphodiesterase. This is Guanine nucleotide-binding protein G(t) subunit alpha (gnat) from Xenopus laevis (African clawed frog).